Reading from the N-terminus, the 2374-residue chain is CCR4-NOT transcription complex subunit 1 (2374 aa).

4 consecutive short sequence motifs (LXXLL) follow at residues 153 to 157, 181 to 185, 223 to 227, and 570 to 574; these read LPDLL, LHLLL, LAPLL, and LSMLL. The span at 1009–1051 shows a compositional bias: low complexity; the sequence is LAQAQAQSQPPKAPQPGQASTLVTTATTTTTAAKTTTITRPTA. Residues 1009–1060 form a disordered region; it reads LAQAQAQSQPPKAPQPGQASTLVTTATTTTTAAKTTTITRPTAVGPKKDVPP. The tract at residues 1082–1604 is interaction with CCR4-NOT complex catalytic subunits; sequence EPPENVQEKI…QPMKQQAWPT (523 aa). 3 short sequence motifs (LXXLL) span residues 1638 to 1642, 1940 to 1944, and 2094 to 2098; these read IRSLL, LIALL, and LRVLL.

This sequence belongs to the CNOT1 family. As to quaternary structure, component of the CCR4-NOT complex.

The protein localises to the cytoplasm. The protein resides in the nucleus. In terms of biological role, scaffolding component of the CCR4-NOT complex which is one of the major cellular mRNA deadenylases and is linked to various cellular processes including bulk mRNA degradation, miRNA-mediated repression, translational repression during translational initiation and general transcription regulation. Additional complex functions may be a consequence of its influence on mRNA expression. Its scaffolding function implies its interaction with the catalytic complex module and diverse RNA-binding proteins mediating the complex recruitment to selected mRNA 3'UTRs. Acts as a transcriptional repressor. Represses the ligand-dependent transcriptional activation by nuclear receptors. The sequence is that of CCR4-NOT transcription complex subunit 1 (cnot1) from Danio rerio (Zebrafish).